Reading from the N-terminus, the 2130-residue chain is Dedicator of cytokinesis protein 7 (2130 aa).

At serine 30 the chain carries Phosphoserine. The interval 137-175 (GFNPNTLDKQKERQKGLPRQVFESDEAPDGSSYQDEQDD) is disordered. 2 positions are modified to phosphoserine: serine 180 and serine 182. The stretch at 365 to 395 (FKEADATKNKEKLEKLKSQADQFCQRLGKYR) forms a coiled coil. Lysine 381 carries the post-translational modification N6-methyllysine. Threonine 450 is subject to Phosphothreonine. At serine 452 the chain carries Phosphoserine. Positions 561-727 (RNLLYIYPQS…GVFNVEVVAV (167 aa)) constitute a C2 DOCK-type domain. 7 positions are modified to phosphoserine: serine 862, serine 864, serine 882, serine 888, serine 896, serine 900, and serine 905. The span at 888–901 (SLNLNRSRSLSNSN) shows a compositional bias: low complexity. A disordered region spans residues 888–966 (SLNLNRSRSL…SCNRMSSHTE (79 aa)). Phosphothreonine is present on residues threonine 907 and threonine 909. Phosphoserine is present on residues serine 910, serine 929, serine 963, serine 1382, serine 1420, serine 1422, serine 1424, and serine 1428. Residues 942 to 966 (SNPSPSAESTQAMDRSCNRMSSHTE) are compositionally biased toward polar residues. The DOCKER domain maps to 1668–2104 (KGYQTSPDLR…LQPLINRKIP (437 aa)). Position 1952 is an N6-acetyllysine (lysine 1952). Positions 2076–2102 (DQKEYQRELERNYHRLKEALQPLINRK) form a coiled coil. Serine 2119 is subject to Phosphoserine.

This sequence belongs to the DOCK family. In terms of assembly, component of the DOCK7-induced septin displacement/DISP complex, at least composed of DOCK7, LRCH3 and MYO6. Interacts with TSC1. Interacts with nucleotide-free RAC1 and RAC3. Interacts with TACC3. Interacts with CRY1. Interacts with NOD2.

It is found in the cell projection. It localises to the axon. Functionally, functions as a guanine nucleotide exchange factor (GEF), which activates Rac1 and Rac3 Rho small GTPases by exchanging bound GDP for free GTP. Does not have a GEF activity for CDC42. Required for STMN1 'Ser-15' phosphorylation during axon formation and consequently for neuronal polarization. As part of the DISP complex, may regulate the association of septins with actin and thereby regulate the actin cytoskeleton. Has a role in pigmentation. Involved in the regulation of cortical neurogenesis through the control of radial glial cells (RGCs) proliferation versus differentiation; negatively regulates the basal-to-apical interkinetic nuclear migration of RGCs by antagonizing the microtubule growth-promoting function of TACC3. The chain is Dedicator of cytokinesis protein 7 (Dock7) from Mus musculus (Mouse).